The primary structure comprises 605 residues: Glucose oxidase (605 aa).

The signal sequence occupies residues 1 to 16 (MQTLLVSSLVVSLAAA). Positions 51 and 52 each coordinate FAD. N-linked (GlcNAc...) asparagine glycosylation occurs at Asn-65. Residue Glu-72 coordinates FAD. Asn-111 is a glycosylation site (N-linked (GlcNAc...) asparagine). Positions 125, 129, 130, and 132 each coordinate FAD. 2 N-linked (GlcNAc...) asparagine glycosylation sites follow: Asn-183 and Asn-190. A disulfide bond links Cys-186 and Cys-228. Position 272 (Val-272) interacts with FAD. N-linked (GlcNAc...) asparagine glycans are attached at residues Asn-280, Asn-377, Asn-410, and Asn-495. His-538 functions as the Proton acceptor in the catalytic mechanism. O2 contacts are provided by Arg-559 and Val-560. Gly-571 and Met-583 together coordinate FAD.

This sequence belongs to the GMC oxidoreductase family. As to quaternary structure, homodimer. It depends on FAD as a cofactor. In terms of processing, the N-linked sugar chains of the glucose oxidase contributed to the high solubility of the enzyme in water.

It is found in the secreted. The protein localises to the cell wall. The protein resides in the cytoplasm. Its subcellular location is the extracellular space. It localises to the extracellular matrix. It catalyses the reaction beta-D-glucose + O2 = D-glucono-1,5-lactone + H2O2. Its function is as follows. Glucose oxidase catalyzes the oxidation of beta-D-glucose to D-glucono-delta-lactone and hydrogen peroxide in the presence of molecular oxygen. D-glucono-delta-lactone is sequentially hydrolyzed by lactonase to D-gluconic acid, and the resulting hydrogen peroxide is hydrolyzed by catalase to oxygen and water. The activity shows high specificity to beta-D-glucose, with very low to no activity towards L-glucose, 2-deoxy-D-glucose, 3-deoxy-D-glucose, 4-deoxy-D-glucose, 5-deoxy-D-glucose, 6-deoxy-D-glucose, 3-O-methyl-D-glucose, 4-O-methyl-D-glucose, 6-O-methyl-D-glucose, 4,6-O-benzylidene-D-glucose, 5-thio-5-deoxy-D-glucose, D-mannose, D-allose, D-galactose, D-fructose, D-arabinose, D-xylose, trehalose, melibiose, L-mannomethylose, lactose, sucrose or 1,5-anhydro-D-glucitol. This Aspergillus niger protein is Glucose oxidase.